The following is a 673-amino-acid chain: MADLRKIKIDDTIIEVDPNMTLIQACEMAGIEVPRFCYHERLSIAGNCRMCLVEVVGGPPKPAASCAMQVKDLRPGPEGAPSEIRTNSPMVKKAREGVMEFLLINHPLDCPICDQGGECDLQDQAMAYGVDFSRYREPKRATEDLNLGPLVETHMTRCISCTRCVRFTTEVAGITQMGQTGRGEDSEITSYLNQTLESNMQGNIIDLCPVGALVSKPYAFTARPWELTKTESIDVMDALGSSIRIDTKGREVMRILPRNHDGVNEEWISDKTRFVWDGLRRQRLDRPYIRENGRLRPASWPEALEAAARAMKGKKIAGLIGDLVPAEAAFSLKQLVEGLGGKVECRVDGARLPAGNRSAYVGTARIEDIDDAEMIQLIGTNPRDEAPVLNARIRKAWSKGAKVGLVGEPVDLTYDYAHVGTDRAALESLSSREISDETKARPSIVIVGQGAIARRDGEAVLAHAMKLAENSNSGLLILHTAAGRVGAMDVGAVTEGGLLAAIDGAEVVYNLGADEVDIDQGPFVIYQGSHGDRGAHRDIILPGACYTEESGLFVNTEGRPQLAMRANFAPGEGKENWAILRALSAELGATQPWDSLAGLRRKLVEAVPHLAQIDQVPQNEWQPLGRFDLGQASFRYAIRDFYLTNPIARSSPLMGELSAMAAARKAPAPLAAE.

Residues 5 to 90 (RKIKIDDTII…PSEIRTNSPM (86 aa)) enclose the 2Fe-2S ferredoxin-type domain. [2Fe-2S] cluster is bound by residues Cys37, Cys48, Cys51, and Cys66. Residues 90–129 (MVKKAREGVMEFLLINHPLDCPICDQGGECDLQDQAMAYG) form the 4Fe-4S His(Cys)3-ligated-type domain. Positions 106, 110, 113, 119, 158, 161, 164, and 208 each coordinate [4Fe-4S] cluster. One can recognise a 4Fe-4S Mo/W bis-MGD-type domain in the interval 227–283 (LTKTESIDVMDALGSSIRIDTKGREVMRILPRNHDGVNEEWISDKTRFVWDGLRRQR).

The protein belongs to the complex I 75 kDa subunit family. As to quaternary structure, NDH-1 is composed of at least 14 different subunits, Nqo1 to Nqo14. The complex has a L-shaped structure, with the hydrophobic arm (subunits Nqo7, Nqo8, Nqo10 to Nqo14) embedded in the inner membrane and the hydrophilic peripheral arm (subunits Nqo1 to Nqo6, Nqo9) protruding into the bacterial cytoplasm. The hydrophilic domain contains all the redox centers. The cofactor is [2Fe-2S] cluster. Requires [4Fe-4S] cluster as cofactor.

It is found in the cell inner membrane. It catalyses the reaction a quinone + NADH + 5 H(+)(in) = a quinol + NAD(+) + 4 H(+)(out). Its function is as follows. NDH-1 shuttles electrons from NADH, via FMN and iron-sulfur (Fe-S) centers, to quinones in the respiratory chain. The immediate electron acceptor for the enzyme in this species is believed to be ubiquinone. Couples the redox reaction to proton translocation (for every two electrons transferred, four hydrogen ions are translocated across the cytoplasmic membrane), and thus conserves the redox energy in a proton gradient. The sequence is that of NADH-quinone oxidoreductase chain 3 from Paracoccus denitrificans.